We begin with the raw amino-acid sequence, 344 residues long: Holliday junction branch migration complex subunit RuvB (344 aa).

Positions Met1–Leu25 are enriched in basic and acidic residues. Positions Met1–Phe33 are disordered. The tract at residues Met1 to Tyr186 is large ATPase domain (RuvB-L). Residues Leu25, Arg26, Gly67, Lys70, Thr71, Thr72, Glu133–Phe135, Arg176, Tyr186, and Arg223 each bind ATP. Thr71 is a binding site for Mg(2+). Residues Thr187–Gly257 form a small ATPAse domain (RuvB-S) region. The tract at residues Asp260–Ile344 is head domain (RuvB-H). DNA is bound by residues Arg296, Arg315, and Arg320.

It belongs to the RuvB family. As to quaternary structure, homohexamer. Forms an RuvA(8)-RuvB(12)-Holliday junction (HJ) complex. HJ DNA is sandwiched between 2 RuvA tetramers; dsDNA enters through RuvA and exits via RuvB. An RuvB hexamer assembles on each DNA strand where it exits the tetramer. Each RuvB hexamer is contacted by two RuvA subunits (via domain III) on 2 adjacent RuvB subunits; this complex drives branch migration. In the full resolvosome a probable DNA-RuvA(4)-RuvB(12)-RuvC(2) complex forms which resolves the HJ.

The protein localises to the cytoplasm. The catalysed reaction is ATP + H2O = ADP + phosphate + H(+). In terms of biological role, the RuvA-RuvB-RuvC complex processes Holliday junction (HJ) DNA during genetic recombination and DNA repair, while the RuvA-RuvB complex plays an important role in the rescue of blocked DNA replication forks via replication fork reversal (RFR). RuvA specifically binds to HJ cruciform DNA, conferring on it an open structure. The RuvB hexamer acts as an ATP-dependent pump, pulling dsDNA into and through the RuvAB complex. RuvB forms 2 homohexamers on either side of HJ DNA bound by 1 or 2 RuvA tetramers; 4 subunits per hexamer contact DNA at a time. Coordinated motions by a converter formed by DNA-disengaged RuvB subunits stimulates ATP hydrolysis and nucleotide exchange. Immobilization of the converter enables RuvB to convert the ATP-contained energy into a lever motion, pulling 2 nucleotides of DNA out of the RuvA tetramer per ATP hydrolyzed, thus driving DNA branch migration. The RuvB motors rotate together with the DNA substrate, which together with the progressing nucleotide cycle form the mechanistic basis for DNA recombination by continuous HJ branch migration. Branch migration allows RuvC to scan DNA until it finds its consensus sequence, where it cleaves and resolves cruciform DNA. The protein is Holliday junction branch migration complex subunit RuvB of Jannaschia sp. (strain CCS1).